The primary structure comprises 299 residues: Taste receptor type 2 member 5 (299 aa).

Residue Met-1 is a topological domain, extracellular. Residues 2-22 (LSAGLGLLMLVAVVEFLIGLI) form a helical membrane-spanning segment. At 23-45 (GNGVLVVWSFREWIRKFSWSSYN) the chain is on the cytoplasmic side. A helical membrane pass occupies residues 46–66 (LIILGLAGCRFVLQWLIILDL). Residues 67–82 (SLFPLFQSSRWLRYLS) lie on the Extracellular side of the membrane. Residues 83–103 (IFWVLVSQASLWFATFLSVFY) form a helical membrane-spanning segment. Residues 104–127 (CKKITTFDHPAYLWLKQRAYNLSL) lie on the Cytoplasmic side of the membrane. A helical transmembrane segment spans residues 128-148 (WCLLGYFIINLLLTVQIGLMF). Over 149 to 175 (YHPPQGNSSIRYPFESWQYLYAFRLNS) the chain is Extracellular. N-linked (GlcNAc...) asparagine glycosylation occurs at Asn-155. Residues 176–196 (GSYLPLMVFLVSSGMLIVSLY) traverse the membrane as a helical segment. At 197–223 (THHKKMKVHSAGRRDVRAKAHITALKS) the chain is on the cytoplasmic side. The helical transmembrane segment at 224-244 (LGCFLLLHLVYIMASPFSIAS) threads the bilayer. Over 245–253 (KTYPPDLTS) the chain is Extracellular. A helical transmembrane segment spans residues 254-274 (VFIWETLMAAYPSLHSLILIM). Topologically, residues 275–299 (GIPRVKQTCQKIXWKTVCARRCWGP) are cytoplasmic.

Belongs to the G-protein coupled receptor T2R family.

It is found in the membrane. In terms of biological role, receptor that may play a role in the perception of bitterness and is gustducin-linked. May play a role in sensing the chemical composition of the gastrointestinal content. The activity of this receptor may stimulate alpha gustducin, mediate PLC-beta-2 activation and lead to the gating of TRPM5. The protein is Taste receptor type 2 member 5 (TAS2R5) of Pan troglodytes (Chimpanzee).